Here is a 365-residue protein sequence, read N- to C-terminus: Cytosolic 5'-nucleotidase 1A (365 aa).

The segment covering 1-11 (MEPGQPREARE) has biased composition (basic and acidic residues). The interval 1–23 (MEPGQPREAREPGPGAETAAVPR) is disordered. D208 (nucleophile) is an active-site residue.

This sequence belongs to the 5'-nucleotidase type 3 family. It depends on Mg(2+) as a cofactor.

It localises to the cytoplasm. It catalyses the reaction a ribonucleoside 5'-phosphate + H2O = a ribonucleoside + phosphate. It carries out the reaction a 2'-deoxyribonucleoside 5'-phosphate + H2O = a 2'-deoxyribonucleoside + phosphate. The enzyme catalyses IMP + H2O = inosine + phosphate. The catalysed reaction is AMP + H2O = adenosine + phosphate. It catalyses the reaction dCMP + H2O = 2'-deoxycytidine + phosphate. With respect to regulation, activated by ADP. In terms of biological role, catalyzes the hydrolysis of ribonucleotide and deoxyribonucleotide monophosphates, releasing inorganic phosphate and the corresponding nucleoside. AMP is the major substrate but can also hydrolyze dCMP and IMP. The chain is Cytosolic 5'-nucleotidase 1A (Nt5c1a) from Mus musculus (Mouse).